We begin with the raw amino-acid sequence, 99 residues long: High mobility group protein I (99 aa).

The tract at residues 1 to 99 is disordered; sequence MSDSPVKKGR…ADTEEVNSSD (99 aa). The residue at position 4 (serine 4) is a Phosphoserine; by CDC2 and MAPK. The a.T hook 1 DNA-binding region spans 7-19; the sequence is KKGRGRPAKAKPE. The span at 16-46 shows a compositional bias: basic and acidic residues; sequence AKPEETASPKAAKKEEKKVEEVPKKIEESTK. Serine 23 bears the Phosphoserine; by MAPK mark. The segment at residues 54 to 66 is a DNA-binding region (a.T hook 2); that stretch reads KKGRGRPSKGDKA. Serine 73 carries the phosphoserine; by PKC modification. The a.T hook 3 DNA-binding region spans 74–86; sequence GKGRGRPAKNAKK. Acidic residues predominate over residues 90–99; that stretch reads ADTEEVNSSD.

This sequence belongs to the HMGA family. Post-translationally, phosphorylated in a cell-cycle dependent manner; substantially reduced in cells that have finished proliferating and are differentiated. Phosphorylation at Ser-4 and Ser-23 results in a 10-fold weakening of DNA-binding activity and altered the mode of protein-DNA interaction.

The protein localises to the nucleus. Its subcellular location is the nucleolus. The protein resides in the chromosome. Binds preferentially to the minor groove of A+T rich regions in double-stranded DNA via the second and third DBA-binding domains. It is suggested that these proteins could function in nucleosome phasing and in the 3'-end processing of mRNA transcripts. They are also involved in the transcription regulation of genes containing, or in close proximity to A+T-rich regions. This Chironomus tentans (Midge) protein is High mobility group protein I.